Here is a 514-residue protein sequence, read N- to C-terminus: HTH-type transcriptional regulatory protein TyrR (514 aa).

In terms of domain architecture, ACT spans 2–72 (RLEVFCEDRL…GVTDVRTVPW (71 aa)). The region spanning 78–120 (EHLALSALLEALPEPVLSLDMKSKIEMANPASCQLFAHTQDRM) is the PAS domain. Positions 206-428 (IIAVSAKMKH…VKNAIYRALT (223 aa)) constitute a Sigma-54 factor interaction domain. Residues 234–241 (GNTGTGKD) and 290–299 (ANGGSVLLDE) contribute to the ATP site. Positions 482-502 (STRKLAKRLGVSHTAIANKLR) form a DNA-binding region, H-T-H motif.

In terms of assembly, homodimer. In presence of tyrosine (or high concentrations of phenylalanine or tryptophan) and ATP, it self-associates to form an hexamer.

Its subcellular location is the cytoplasm. Functionally, dual transcriptional regulator of the TyrR regulon, which includes a number of genes coding for proteins involved in the biosynthesis or transport of the three aromatic amino acids, phenylalanine, tyrosine and tryptophan. These three aromatic amino acids act as effectors which bind to the TyrR protein to form an active regulatory protein. Acts by binding specifically to TyrR boxes in the promoter region of the target genes. The chain is HTH-type transcriptional regulatory protein TyrR from Citrobacter braakii.